Here is a 351-residue protein sequence, read N- to C-terminus: Phenoloxidase-activating factor 3 (351 aa).

The signal sequence occupies residues 1 to 19; that stretch reads MWLSLVILGVASAIVNVST. An N-linked (GlcNAc...) asparagine glycan is attached at asparagine 16. Positions 22–73 constitute a Clip domain; it reads SCTTPNGETATCLPIESCKIFWDYVVTSGADPEINSFLRASLCRQGNYVVCC. Intrachain disulfides connect cysteine 23/cysteine 72, cysteine 33/cysteine 64, cysteine 39/cysteine 73, cysteine 89/cysteine 224, cysteine 127/cysteine 143, cysteine 167/cysteine 176, cysteine 268/cysteine 285, and cysteine 295/cysteine 326. In terms of domain architecture, Peptidase S1 spans 97-350; the sequence is VLGGEDTDLG…HLDWIKQNVR (254 aa). Histidine 142 acts as the Charge relay system in catalysis. Ca(2+) contacts are provided by glutamate 158, aspartate 160, alanine 163, and aspartate 166. Residue aspartate 204 is the Charge relay system of the active site. Serine 299 (charge relay system) is an active-site residue.

It belongs to the peptidase S1 family. CLIP subfamily. In the active form, heterodimer of a light chain and a heavy chain; disulfide-linked. Proteolytically cleaved.

The protein resides in the secreted. Cleavage of PPAF2 is Ca(2+)-independent. Inhibited by heparin. Functionally, serine endopeptidase which, by cleaving prophenoloxidase activating factor PPAF2, is required for the activation of the prophenoloxidase cascade probably following the recognition of pathogen-derived products. This Holotrichia diomphalia (Korean black chafer) protein is Phenoloxidase-activating factor 3.